Consider the following 746-residue polypeptide: MEHTYQYSWIIPFIPLPVPILLGVGLLLFPTATKNLRRIWTFLSIFLLSIVMIFSLYLSIQQIFISCIHQNVWSWTINNEFSFEFGYFIDPLTSIMSILITTVGILVLIYSDNYMSHDQGYLRFFAYMGFFNTSMLGLVTSSNLIQVYFFWELVGMCSYLLIGFWFTRPVAANACQKAFVTNRVGDFGLLLGILGLYWITGSFEFQDLFEIFNNLILNNRVNFFFFTLCGFLLFVGPIAKSAQFPLHVWLPDAMEGPTPISALIHAATMVAAGIFLVARLLPLFIVIPSIMYIISLIGIITVLLGATLALAQKDIKRGLAYSTMSQLGYMMLALGMGSYRSALFHLITHAYSKALLFLGSGSIIHSMEAIVGYSPDKSQNMILMGGLTKHVPITKTAFLIGTLSLCGIPPLACFWSKDEILNDSLLFSPIFAIIACSTAGLTAFYMFRIYLLTFEGHLNTYFLNYSGKKSRSFYSLSLWGKEEEKKLNKNFGLVPLLTMNNTKRSSFFCNKTYKISNNVRNKIFITVENFGLNTRTFYYPHESDNTILFPILILLLFTLFIGAIGIPFNQEGIDFDILSKLFTPSINLLHNNSQNFVDWYEFLRNATFSVSIAFFGIFIAYCLYKPFYSSLLNLTLLNSFQKWNSKRIRWEKLINFVYNWSYNRGYIDAFFKTYLIESIRGLAKQTNFVDKRIIDGITNGVGITSFFVGEVTKYIGGSRISSYLFFYLSYVLIFLLILFFFYFEKF.

Transmembrane regions (helical) follow at residues 9–29 (WIIPFIPLPVPILLGVGLLLF), 39–59 (IWTFLSIFLLSIVMIFSLYLS), 89–109 (IDPLTSIMSILITTVGILVLI), 125–145 (FAYMGFFNTSMLGLVTSSNLI), 147–167 (VYFFWELVGMCSYLLIGFWFT), 185–205 (GDFGLLLGILGLYWITGSFEF), 221–241 (VNFFFFTLCGFLLFVGPIAKS), 258–278 (TPISALIHAATMVAAGIFLVA), 280–300 (LLPLFIVIPSIMYIISLIGII), 327–347 (LGYMMLALGMGSYRSALFHLI), 354–374 (ALLFLGSGSIIHSMEAIVGYS), 396–416 (TAFLIGTLSLCGIPPLACFWS), 425–445 (LLFSPIFAIIACSTAGLTAFY), 547–567 (ILFPILILLLFTLFIGAIGIP), 608–628 (FSVSIAFFGIFIAYCLYKPFY), and 723–743 (YLFFYLSYVLIFLLILFFFYF).

This sequence belongs to the complex I subunit 5 family. NDH is composed of at least 16 different subunits, 5 of which are encoded in the nucleus.

Its subcellular location is the plastid. The protein localises to the chloroplast thylakoid membrane. The catalysed reaction is a plastoquinone + NADH + (n+1) H(+)(in) = a plastoquinol + NAD(+) + n H(+)(out). It catalyses the reaction a plastoquinone + NADPH + (n+1) H(+)(in) = a plastoquinol + NADP(+) + n H(+)(out). NDH shuttles electrons from NAD(P)H:plastoquinone, via FMN and iron-sulfur (Fe-S) centers, to quinones in the photosynthetic chain and possibly in a chloroplast respiratory chain. The immediate electron acceptor for the enzyme in this species is believed to be plastoquinone. Couples the redox reaction to proton translocation, and thus conserves the redox energy in a proton gradient. This is NAD(P)H-quinone oxidoreductase subunit 5, chloroplastic (ndhF) from Capsella bursa-pastoris (Shepherd's purse).